A 330-amino-acid chain; its full sequence is MTQIINITQSKVISEQILRHVFRHRRLISDTEPCVHQPCSLCLAPHLEKVQYFVEHNEPIHFILPAFPAKSPNTQKVLGTMPDMGEQVSLKFLQSLCDQISEIYAPGAKLTICSDGRVFSDLVGVTDENVTLYGQIIQALLKEMKADAIDVFNLEDMYTDLSFDEMRQKLVKLYGQTIEAIKDAVKNNDHQCQMFNGIHRFLVEDYQVLEAHKSRNKIRLECKTRAYEVIQRSNAWSVLISELYPHSVRLSIHPQHYHSEKIGIHMIKTLDQWGTPWHNATVFDGKEFMLMKRSHLESMGATLVCQNGHPSYFAWTEQPLETRITVQEVI.

This sequence belongs to the isocyanide synthase family.

It catalyses the reaction D-ribulose 5-phosphate + L-tryptophan = (2S)-3-(1H-indol-3-yl)-2-isocyanopropanoate + hydroxyacetone + formaldehyde + phosphate + H2O + H(+). Its function is as follows. Involved in the biosynthesis of ambiguines, a family of hapalindole-type alkaloids. Responsible for the synthesis of the isonitrile group on tryptophan using ribulose 5-phosphate as the source of the carbon atom. This is L-tryptophan isonitrile synthase AmbI2 from Fischerella ambigua (strain UTEX 1903).